The primary structure comprises 142 residues: Large ribosomal subunit protein uL11 (142 aa).

This sequence belongs to the universal ribosomal protein uL11 family. As to quaternary structure, part of the ribosomal stalk of the 50S ribosomal subunit. Interacts with L10 and the large rRNA to form the base of the stalk. L10 forms an elongated spine to which L12 dimers bind in a sequential fashion forming a multimeric L10(L12)X complex. In terms of processing, one or more lysine residues are methylated.

Its function is as follows. Forms part of the ribosomal stalk which helps the ribosome interact with GTP-bound translation factors. The protein is Large ribosomal subunit protein uL11 of Mesorhizobium japonicum (strain LMG 29417 / CECT 9101 / MAFF 303099) (Mesorhizobium loti (strain MAFF 303099)).